The primary structure comprises 582 residues: uncharacterized protein (582 aa).

The next 6 membrane-spanning stretches (helical) occupy residues 17-37, 57-77, 131-151, 156-176, 239-259, and 271-291; these read VAML…LPTV, LGAV…GAVY, MTAT…IMAI, ALTW…YWII, ALML…LIWF, and VGSL…VLMA. Positions 17 to 300 constitute an ABC transmembrane type-1 domain; the sequence is VAMLMMLQLV…ATMTLAVLPR (284 aa). Residues 335 to 571 form the ABC transporter domain; sequence VRLAGATFTY…CPTYAEFAAS (237 aa). Position 369-376 (369-376) interacts with ATP; it reads GSTGSGKS.

This sequence belongs to the ABC transporter superfamily.

The protein resides in the cell membrane. This is an uncharacterized protein from Mycobacterium tuberculosis (strain CDC 1551 / Oshkosh).